A 272-amino-acid chain; its full sequence is Universal stress protein MT2699 (272 aa).

ATP is bound by residues Gly-15, 109–115 (GSVGIGR), and 123–124 (ST).

Belongs to the universal stress protein A family.

In Mycobacterium tuberculosis (strain CDC 1551 / Oshkosh), this protein is Universal stress protein MT2699.